Here is a 112-residue protein sequence, read N- to C-terminus: Large ribosomal subunit protein bL17 (112 aa).

Belongs to the bacterial ribosomal protein bL17 family. In terms of assembly, part of the 50S ribosomal subunit. Contacts protein L32.

This is Large ribosomal subunit protein bL17 from Heliobacterium modesticaldum (strain ATCC 51547 / Ice1).